The sequence spans 156 residues: Small ribosomal subunit protein uS7 (156 aa).

Belongs to the universal ribosomal protein uS7 family. As to quaternary structure, part of the 30S ribosomal subunit. Contacts proteins S9 and S11.

Functionally, one of the primary rRNA binding proteins, it binds directly to 16S rRNA where it nucleates assembly of the head domain of the 30S subunit. Is located at the subunit interface close to the decoding center, probably blocks exit of the E-site tRNA. This is Small ribosomal subunit protein uS7 from Nostoc punctiforme (strain ATCC 29133 / PCC 73102).